A 232-amino-acid chain; its full sequence is uncharacterized protein (232 aa).

The helical transmembrane segment at 10–32 (GLTIYLYPVIAWIILVTKIESGL) threads the bilayer.

It is found in the membrane. This is an uncharacterized protein from Archaeoglobus fulgidus (strain ATCC 49558 / DSM 4304 / JCM 9628 / NBRC 100126 / VC-16).